Here is a 1062-residue protein sequence, read N- to C-terminus: Integrin alpha-8 (1062 aa).

An N-terminal signal peptide occupies residues 1–35; it reads MSAGTHCGPPGNRAPPFARLCCVSAALGMLWSPAC. Residues 36 to 1010 lie on the Extracellular side of the membrane; the sequence is LAFNLDVDKL…ATPNVSFSIP (975 aa). 7 FG-GAP repeats span residues 41–104, 121–182, 187–239, 252–305, 306–371, 372–430, and 434–497; these read DVDK…RSAQ, NGTK…AYAE, RNSN…IANY, KQTD…STDM, TFIQ…LLFQ, DPQV…GLHS, and QVLQ…LHPM. The N-linked (GlcNAc...) asparagine glycan is linked to N80. C95 and C105 form a disulfide bridge. N-linked (GlcNAc...) asparagine glycosylation is present at N121. C149 and C170 are disulfide-bonded. N176 carries N-linked (GlcNAc...) asparagine glycosylation. C186 and C199 are oxidised to a cystine. N238 is a glycosylation site (N-linked (GlcNAc...) asparagine). Residues E274, T276, D278, and E282 each coordinate Ca(2+). N-linked (GlcNAc...) asparagine glycans are attached at residues N301 and N310. The Ca(2+) site is built by D328, N330, D332, D336, D394, N396, D398, Y400, and D402. The short motif at 454 to 456 is the Cell attachment site element; sequence RGD. Residues D458, D460, N462, Y464, and D466 each coordinate Ca(2+). N503 carries an N-linked (GlcNAc...) asparagine glycan. Intrachain disulfides connect C506-C517 and C523-C579. N-linked (GlcNAc...) asparagine glycosylation is found at N600 and N604. Disulfide bonds link C640-C646 and C712-C725. 6 N-linked (GlcNAc...) asparagine glycosylation sites follow: N718, N736, N752, N779, N895, and N922. Cystine bridges form between C866-C923 and C928-C933. A glycan (N-linked (GlcNAc...) asparagine) is linked at N1004. A helical transmembrane segment spans residues 1011-1031; the sequence is LWVIILAILLGLLVLAILTLA. At 1032–1062 the chain is on the cytoplasmic side; sequence LWKCGFFDRARPPQDEMTDREQLTSDKTPEA.

It belongs to the integrin alpha chain family. As to quaternary structure, heterodimer of an alpha and a beta subunit. The alpha subunit is composed of a heavy and a light chain linked by a disulfide bond. Alpha-8 associates with beta-1. In terms of tissue distribution, in brain, expressed in deep cortex, hippocampal CA1, basolateral amygdala and striatum. In kidney, expressed in glomerular mesengium (at protein level).

It localises to the membrane. It is found in the cell membrane. Integrin alpha-8/beta-1 functions in the genesis of kidney and probably of other organs by regulating the recruitment of mesenchymal cells into epithelial structures. It recognizes the sequence R-G-D in a wide array of ligands including TNC, FN1, SPP1 TGFB1, TGFB3 and VTN. NPNT is probably its functional ligand in kidney genesis. Neuronal receptor for TNC it mediates cell-cell interactions and regulates neurite outgrowth of sensory and motor neurons. The sequence is that of Integrin alpha-8 (Itga8) from Mus musculus (Mouse).